We begin with the raw amino-acid sequence, 249 residues long: uncharacterized protein (249 aa).

Residues H10, H12, E95, H129, H150, and D198 each coordinate a divalent metal cation.

This sequence belongs to the metallo-dependent hydrolases superfamily. TatD-type hydrolase family. Requires a divalent metal cation as cofactor.

This is an uncharacterized protein from Methanocaldococcus jannaschii (strain ATCC 43067 / DSM 2661 / JAL-1 / JCM 10045 / NBRC 100440) (Methanococcus jannaschii).